The sequence spans 61 residues: Small ribosomal subunit protein uS14 (61 aa).

4 residues coordinate Zn(2+): C24, C27, C40, and C43.

It belongs to the universal ribosomal protein uS14 family. Zinc-binding uS14 subfamily. As to quaternary structure, part of the 30S ribosomal subunit. Contacts proteins S3 and S10. Zn(2+) serves as cofactor.

Functionally, binds 16S rRNA, required for the assembly of 30S particles and may also be responsible for determining the conformation of the 16S rRNA at the A site. This chain is Small ribosomal subunit protein uS14, found in Mycoplasma pneumoniae (strain ATCC 29342 / M129 / Subtype 1) (Mycoplasmoides pneumoniae).